The sequence spans 200 residues: Molybdenum cofactor guanylyltransferase (200 aa).

GTP is bound by residues 15-17, lysine 28, aspartate 74, and aspartate 104; that span reads LAG. Aspartate 104 is a Mg(2+) binding site.

Belongs to the MobA family. Monomer. Requires Mg(2+) as cofactor.

Its subcellular location is the cytoplasm. The enzyme catalyses Mo-molybdopterin + GTP + H(+) = Mo-molybdopterin guanine dinucleotide + diphosphate. Its function is as follows. Transfers a GMP moiety from GTP to Mo-molybdopterin (Mo-MPT) cofactor (Moco or molybdenum cofactor) to form Mo-molybdopterin guanine dinucleotide (Mo-MGD) cofactor. The sequence is that of Molybdenum cofactor guanylyltransferase from Pseudomonas fluorescens (strain Pf0-1).